A 450-amino-acid chain; its full sequence is Immunoglobulin G-binding protein A (450 aa).

The first 36 residues, 1-36, serve as a signal peptide directing secretion; sequence MKKKNIYSIRKLGVGIASVTLGTLLISGGVTPAANA. Residues 7–18 carry the YSIRK-G/S signaling motif motif; that stretch reads YSIRKLGVGIAS. The stretch at 37–92 is one Immunoglobulin-binding region E repeat; the sequence is AQHDEAQQNAFYQVLNMPNLNADQRNGFIQSLKDDPSQSANVLGEAQKLNDSQAPK. An Immunoglobulin-binding region D repeat occupies 93–153; the sequence is ADAQQNNFNK…KKLNESQAPK (61 aa). The Immunoglobulin-binding region A repeat unit spans residues 154–211; the sequence is ADNNFNKEQQNAFYEILNMPNLNEEQRNGFIQSLKDDPSQSANLLSEAKKLNESQAPK. The stretch at 212-269 is one Immunoglobulin-binding region B/C repeat; it reads ADNKFNKEQQNAFYEILHLPNLNEEQRNGFIQSLKDDPSVSKEILAEAKKLNDAQAPK. Over residues 260–354 the composition is skewed to basic and acidic residues; it reads KKLNDAQAPK…GNKPGKEDGN (95 aa). Disordered stretches follow at residues 260 to 365 and 401 to 421; these read KKLN…GDTV and KKQPANHADANKAQALPETGE. Tandem repeats lie at residues 268–275, 276–283, 284–291, 292–299, 300–307, 308–315, 316–323, 324–331, 332–339, 340–347, and 348–355. The 12 X 8 AA approximate tandem repeats stretch occupies residues 268 to 355; it reads PKEEDNKKPG…NKPGKEDGNG (88 aa). Residues 355–399 enclose the LysM domain; that stretch reads GVHVVKPGDTVNDIAKANGTTADKIAADNKLADKNMIKPGQELVV. The short motif at 416 to 420 is the LPXTG sorting signal element; the sequence is LPETG. Residue T419 is modified to Pentaglycyl murein peptidoglycan amidated threonine. Residues 420 to 450 constitute a propeptide, removed by sortase; it reads GEENPFIGTTVFGGLSLALGAALLAGRRREL.

Belongs to the immunoglobulin-binding protein SpA family. Interacts with host TNFRSF1A; this interaction leads to the stimulation of both surface expression and shedding of TNFRSF1A.

It is found in the secreted. It localises to the cell wall. Its function is as follows. Plays a role in the inhibition of the host innate and adaptive immune responses. Possesses five immunoglobulin-binding domains that capture both the fragment crystallizable region (Fc region) and the Fab region (part of Ig that identifies antigen) of immunoglobulins. In turn, Staphylococcus aureus is protected from phagocytic killing via inhibition of Ig Fc region. In addition, the host elicited B-cell response is prevented due to a decrease of antibody-secreting cell proliferation that enter the bone marrow, thereby decreasing long-term antibody production. Inhibits osteogenesis by preventing osteoblast proliferation and expression of alkaline phosphatase, type I collagen, osteopontin and osteocalcin. Acts directly as a pro-inflammatory factor in the lung through its ability to bind and activate tumor necrosis factor alpha receptor 1/TNFRSF1A. In Staphylococcus aureus (strain Mu50 / ATCC 700699), this protein is Immunoglobulin G-binding protein A (spa).